Consider the following 210-residue polypeptide: High-affinity nitrate transporter 3.1 (210 aa).

The signal sequence occupies residues 1 to 22 (MAIQKILFASLLICSLIQSIHG). Residues 178–198 (LDIASICFSVFSVVALVVFFV) traverse the membrane as a helical segment.

It belongs to the NAR2 family. In terms of assembly, heterotetramer composed of two NRT2.1 and two NRT3.1. Interacts with NRT2.1 and NRT2.3. Interacts with all other NRT2 transporters, including NRT2.5. In terms of tissue distribution, highly expressed in roots. Detected in shoots.

The protein resides in the cell membrane. In terms of biological role, acts as a dual component transporter with NTR2.1. Required for high-affinity nitrate transport. Acts as a repressor of lateral root initiation. May be involved in targeting NRT2 proteins to the plasma membrane. In Arabidopsis thaliana (Mouse-ear cress), this protein is High-affinity nitrate transporter 3.1 (NRT3.1).